The following is a 321-amino-acid chain: Taste receptor type 2 member 135 (321 aa).

The Extracellular portion of the chain corresponds to 1 to 28 (MGPIMSTGETSTAHTVLGCQITDKTVIT). A helical transmembrane segment spans residues 29–49 (LFVILVFSCLVAVVGNGFIII). The Cytoplasmic portion of the chain corresponds to 50–75 (ALGMKWLLRRTLSAHNKLLISLAASR). The chain crosses the membrane as a helical span at residues 76 to 96 (FCLQCVVIGKNIYVFLNPSSF). At 97 to 106 (PYNPVIQLLN) the chain is on the extracellular side. Residues 107–127 (LMWDFLTAATIWFCSLLGFFY) form a helical membrane-spanning segment. The Cytoplasmic segment spans residues 128–149 (CVKIATLTHPVFVWLKYRLPGW). The helical transmembrane segment at 150–170 (VPWMLLSAVGMSSLTSILCFI) threads the bilayer. The Extracellular segment spans residues 171 to 207 (GNHMIYQNYARRGHQPWNATGNSLRHSLEKFYFISIK). N188 is a glycosylation site (N-linked (GlcNAc...) asparagine). The helical transmembrane segment at 208 to 228 (IIMWTVPTVIFSIFMSLLLVS) threads the bilayer. Residues 229 to 253 (LVRHMKKTLLALSELRDVWAQAHFK) are Cytoplasmic-facing. The chain crosses the membrane as a helical span at residues 254 to 274 (ALLPLLSFIILFISCFLTLVL). The Extracellular segment spans residues 275 to 286 (SSASSTPYQEFR). A helical membrane pass occupies residues 287–307 (YWMWQVVIHLCTVIHPIVILL). At 308–321 (SNPVLRVVMKRGCC) the chain is on the cytoplasmic side.

It belongs to the G-protein coupled receptor T2R family.

The protein localises to the membrane. Putative taste receptor which may play a role in the perception of bitterness. The polypeptide is Taste receptor type 2 member 135 (Rattus norvegicus (Rat)).